We begin with the raw amino-acid sequence, 485 residues long: Sodium-coupled neutral amino acid symporter 1 (485 aa).

Topologically, residues 1–74 are cytoplasmic; sequence MMHFKSGLEL…EYIPGTTSLG (74 aa). At Ser6 the chain carries Phosphoserine. The residue at position 11 (Thr11) is a Phosphothreonine. Phosphoserine occurs at positions 25, 28, 49, and 52. Phosphothreonine is present on Thr54. Residue Ser56 is modified to Phosphoserine. The helical transmembrane segment at 75–97 threads the bilayer; that stretch reads MSVFNLSNAIMGSGILGLAFALA. Over 98–112 the chain is Extracellular; sequence NTGILLFLILLTSVT. A helical membrane pass occupies residues 113–133; the sequence is LLSIYSINLLLICSKETGCMV. At 134–148 the chain is on the cytoplasmic side; the sequence is YEKLGEQVFGTTGKL. A helical transmembrane segment spans residues 149 to 169; it reads VIFGATSLQNTGAMLSYLFIV. Topologically, residues 170 to 188 are extracellular; it reads KNELPSAIKSLMGEEETFS. The chain crosses the membrane as a helical span at residues 189–211; the sequence is AWYVDGRVLVVMVTFGIILPLCL. At 212–216 the chain is on the cytoplasmic side; that stretch reads LKNLG. A helical membrane pass occupies residues 217–237; it reads YLGYTSGFSLSCMVFFLIVVI. Over 238-273 the chain is Extracellular; the sequence is YKKFQIPCMNGEQNSTVSANVTDACTPKYVTFNSKT. The cysteines at positions 245 and 262 are disulfide-linked. 2 N-linked (GlcNAc...) asparagine glycosylation sites follow: Asn251 and Asn257. Residues 274-294 form a helical membrane-spanning segment; it reads VYALPTIAFAFVCHPSVLPIY. The Cytoplasmic segment spans residues 295–310; sequence SELKDRSQKKMQMVSN. A helical membrane pass occupies residues 311 to 331; the sequence is ISFFAMFVMYFLTAIFGYLTF. Topologically, residues 332-348 are extracellular; it reads YEKVQSDLLHKYQSTGD. A helical membrane pass occupies residues 349-369; sequence ILILTVRLAVIVAVILTVPVL. Residues 370 to 391 lie on the Cytoplasmic side of the membrane; the sequence is FFTVRSSLFELAKKTKFHLCRH. A helical transmembrane segment spans residues 392–412; it reads VLVTIILLVIINLLVIFIPSM. At 413–414 the chain is on the extracellular side; the sequence is KD. Residues 415-435 traverse the membrane as a helical segment; sequence IFGVVGVTSANMLIFILPSSL. Residues 436-450 are Cytoplasmic-facing; it reads YLKITNQDGDKNTQR. Residues 451-471 traverse the membrane as a helical segment; that stretch reads IWAALFLALGVLFSLISIPLV. The Extracellular portion of the chain corresponds to 472–485; that stretch reads IYDWACSSSNGEGH.

This sequence belongs to the amino acid/polyamine transporter 2 family. In terms of processing, N-glycosylation plays an important role in the L-glutamine transport. Specifically expressed in brain with the highest levels in cerebellum and thalamus (at protein level). Expressed in glutamatergic, GABAergic and a subset of dopaminergic neurons of the substantia nigra and cholinergic motoneurons (at protein level). Also expressed by ependymal cells lining the ventricle (at protein level). Expression is also detected in spinal cord, heart, colon and placenta.

It is found in the cell membrane. It carries out the reaction L-glutamine(in) + Na(+)(in) = L-glutamine(out) + Na(+)(out). It catalyses the reaction L-alanine(in) + Na(+)(in) = L-alanine(out) + Na(+)(out). The enzyme catalyses L-asparagine(in) + Na(+)(in) = L-asparagine(out) + Na(+)(out). The catalysed reaction is L-histidine(in) + Na(+)(in) = L-histidine(out) + Na(+)(out). It carries out the reaction L-serine(in) + Na(+)(in) = L-serine(out) + Na(+)(out). It catalyses the reaction L-cysteine(in) + Na(+)(in) = L-cysteine(out) + Na(+)(out). The enzyme catalyses L-methionine(in) + Na(+)(in) = L-methionine(out) + Na(+)(out). The catalysed reaction is glycine(in) + Na(+)(in) = glycine(out) + Na(+)(out). It carries out the reaction L-threonine(in) + Na(+)(in) = L-threonine(out) + Na(+)(out). It catalyses the reaction L-proline(in) + Na(+)(in) = L-proline(out) + Na(+)(out). With respect to regulation, inhibited by alpha-(methylamino)isobutyric acid (MeAIB). Inhibited by lithium, potassium, choline ions, N-methylglucamine. The pH dependence has an allosteric effect on the transport. Functionally, symporter that cotransports short-chain neutral amino acids and sodium ions from the extraccellular to the intracellular side of the cell membrane. The transport is elctrogenic, pH dependent and driven by the Na(+) electrochemical gradient. Participates in the astroglia-derived glutamine transport into GABAergic interneurons for neurotransmitter GABA de novo synthesis. May also contributes to amino acid transport in placental trophoblast. Regulates synaptic plasticity. In Rattus norvegicus (Rat), this protein is Sodium-coupled neutral amino acid symporter 1.